The following is a 115-amino-acid chain: NADH-ubiquinone oxidoreductase chain 3 (115 aa).

3 helical membrane passes run 3-23, 55-75, and 87-107; these read LMLTLFTNATLASLLILIAFW, FFLVAITFLLFDLEIALLLPL, and VLFMALALITLLALSLAYEWI.

The protein belongs to the complex I subunit 3 family. Core subunit of respiratory chain NADH dehydrogenase (Complex I) which is composed of 45 different subunits. Interacts with TMEM186. Interacts with TMEM242.

Its subcellular location is the mitochondrion inner membrane. It carries out the reaction a ubiquinone + NADH + 5 H(+)(in) = a ubiquinol + NAD(+) + 4 H(+)(out). Functionally, core subunit of the mitochondrial membrane respiratory chain NADH dehydrogenase (Complex I) which catalyzes electron transfer from NADH through the respiratory chain, using ubiquinone as an electron acceptor. Essential for the catalytic activity of complex I. The protein is NADH-ubiquinone oxidoreductase chain 3 of Dugong dugon (Dugong).